The chain runs to 180 residues: MASSIMSSAAVATRSNGAQASMVAPFTGLKSNASFPVSRKTNLDITSIASNGGRVRCMQVWPPINMKKYETLSYLPDLSSEQLLSEIEYLLKNGWVPCLEFETEHGFVYREHTSSPGYYDGRYWTMWKLPMFGCTDATQVAAEVQEAKKAYPDAHIRIIGFDNVRQVQCISFIAYKPEAF.

Residues 1–56 (MASSIMSSAAVATRSNGAQASMVAPFTGLKSNASFPVSRKTNLDITSIASNGGRVR) constitute a chloroplast transit peptide.

This sequence belongs to the RuBisCO small chain family. As to quaternary structure, heterohexadecamer of 8 large and 8 small subunits.

The protein resides in the plastid. It localises to the chloroplast. RuBisCO catalyzes two reactions: the carboxylation of D-ribulose 1,5-bisphosphate, the primary event in carbon dioxide fixation, as well as the oxidative fragmentation of the pentose substrate. Both reactions occur simultaneously and in competition at the same active site. Although the small subunit is not catalytic it is essential for maximal activity. The protein is Ribulose bisphosphate carboxylase small subunit, chloroplastic of Stellaria longipes (Longstalk starwort).